The chain runs to 253 residues: Small ribosomal subunit protein uS2 (253 aa).

The protein belongs to the universal ribosomal protein uS2 family.

The chain is Small ribosomal subunit protein uS2 from Cereibacter sphaeroides (strain ATCC 17023 / DSM 158 / JCM 6121 / CCUG 31486 / LMG 2827 / NBRC 12203 / NCIMB 8253 / ATH 2.4.1.) (Rhodobacter sphaeroides).